We begin with the raw amino-acid sequence, 366 residues long: Autophagy-related protein 18b (366 aa).

WD repeat units follow at residues 6–44, 178–218, and 223–265; these read SLPS…LCYE, AHRS…KSYS, and TYPS…NQRS.

This sequence belongs to the WD repeat PROPPIN family. As to quaternary structure, component of the PI(3,5)P2 regulatory complex at least composed of ATG18, SAC/FIG4, FAB1 and VAC14. As to expression, expressed in roots, stems, flowers and leaves.

Its subcellular location is the preautophagosomal structure membrane. It is found in the vacuole membrane. The PI(3,5)P2 regulatory complex regulates both the synthesis and turnover of phosphatidylinositol 3,5-bisphosphate (PtdIns(3,5)P2). Required for autophagy. This Arabidopsis thaliana (Mouse-ear cress) protein is Autophagy-related protein 18b (ATG18B).